The chain runs to 368 residues: Zinc finger protein 24 (368 aa).

Lys-22 participates in a covalent cross-link: Glycyl lysine isopeptide (Lys-Gly) (interchain with G-Cter in SUMO2). Lys-27 is covalently cross-linked (Glycyl lysine isopeptide (Lys-Gly) (interchain with G-Cter in SUMO1); alternate). Lys-27 is covalently cross-linked (Glycyl lysine isopeptide (Lys-Gly) (interchain with G-Cter in SUMO2); alternate). In terms of domain architecture, SCAN box spans 52 to 134 (RQRFRQFGYQ…TVLEDLESEL (83 aa)). Residues Ser-132 and Ser-142 each carry the phosphoserine modification. Residues Lys-147, Lys-177, and Lys-236 each participate in a glycyl lysine isopeptide (Lys-Gly) (interchain with G-Cter in SUMO2) cross-link. The C2H2-type 1 zinc finger occupies 251 to 273 (HICDECGKHFSQGSALILHQRIH). The tract at residues 251–301 (HICDECGKHFSQGSALILHQRIHSGEKPYGCVECGKAFSRSSILVQHQRVH) is necessary and sufficient for nuclear localization. At Ser-274 the chain carries Phosphoserine. Residues Lys-277 and Lys-286 each participate in a glycyl lysine isopeptide (Lys-Gly) (interchain with G-Cter in SUMO2) cross-link. 3 consecutive C2H2-type zinc fingers follow at residues 279–301 (YGCV…QRVH), 307–329 (YKCL…QRIH), and 335–357 (YECV…XXRH). The residue at position 292 (Ser-292) is a Phosphoserine. Residue Tyr-335 is modified to Phosphotyrosine. Residues Lys-361 and Lys-367 each participate in a glycyl lysine isopeptide (Lys-Gly) (interchain with G-Cter in SUMO2) cross-link.

It belongs to the krueppel C2H2-type zinc-finger protein family. In terms of processing, sumoylated.

It is found in the nucleus. Functionally, transcription factor required for myelination of differentiated oligodendrocytes. Required for the conversion of oligodendrocytes from the premyelinating to the myelinating state. In the developing central nervous system (CNS), involved in the maintenance in the progenitor stage by promoting the cell cycle. Specifically binds to the 5'-TCAT-3' DNA sequence. Has transcription repressor activity in vitro. The polypeptide is Zinc finger protein 24 (ZNF24) (Pan troglodytes (Chimpanzee)).